Reading from the N-terminus, the 393-residue chain is Protein TsgA (393 aa).

Topologically, residues 1 to 10 are cytoplasmic; the sequence is MTNSNRIKLT. Residues 11–31 form a helical membrane-spanning segment; the sequence is WISFLSYALTGALVIVTGMVM. Over 32–50 the chain is Periplasmic; sequence GNIADYFHLPVSSMSNTFT. Residues 51-71 form a helical membrane-spanning segment; sequence FLNAGILISIFLNAWLMEIIP. At 72-77 the chain is on the cytoplasmic side; that stretch reads LKTQLR. A helical membrane pass occupies residues 78–98; that stretch reads FGFILMVLAVAGLMFGHSLAL. Over 99 to 100 the chain is Periplasmic; sequence FS. The helical transmembrane segment at 101–121 threads the bilayer; the sequence is AAMFVLGLVSGITMSIGTFLI. The Cytoplasmic portion of the chain corresponds to 122–133; sequence TQLYEGRQRGSR. Residues 134–154 traverse the membrane as a helical segment; sequence LLFTDSFFSMAGMIFPMVAAF. Residues 155–161 lie on the Periplasmic side of the membrane; that stretch reads LLARSIE. A helical transmembrane segment spans residues 162–182; the sequence is WYWVYACIGLVYLAIFILTFG. Topologically, residues 183–205 are cytoplasmic; it reads CEFPALGKHAQHSQAPVVKEKWG. Residues 206–226 traverse the membrane as a helical segment; that stretch reads IGVLFLAVAALCYILGQLGFI. Residues 227–244 are Periplasmic-facing; that stretch reads SWVPEYAKGLGMSLNDAG. Residues 245–265 form a helical membrane-spanning segment; it reads ALVSDFWMSYMFGMWAFSFIL. Topologically, residues 266–272 are cytoplasmic; it reads RFFDLQR. The helical transmembrane segment at 273 to 293 threads the bilayer; it reads ILTVLAGMAAVLMYLFITGTQ. At 294-297 the chain is on the periplasmic side; the sequence is AHMP. The chain crosses the membrane as a helical span at residues 298–318; the sequence is WFILTLGFFSSAIYTSIITLG. At 319-331 the chain is on the cytoplasmic side; that stretch reads SQQTKVASPKLVN. A helical transmembrane segment spans residues 332–352; the sequence is FILTCGTIGTMLTFVVTGPIV. Over 353–360 the chain is Periplasmic; sequence AHSGPQAA. Residues 361–381 traverse the membrane as a helical segment; it reads LLTANGLYAVVFVMCFALGFV. At 382–393 the chain is on the cytoplasmic side; the sequence is SRHRQHSAPATH.

It belongs to the major facilitator superfamily. TsgA family.

It is found in the cell inner membrane. This Salmonella choleraesuis (strain SC-B67) protein is Protein TsgA.